The chain runs to 739 residues: Nucleoprotein (739 aa).

Positions 1–25 (MDSRPQKIWMAPSLTESDMDYHKIL) are oligomerization, N-terminal arm. An NP core region spans residues 26-405 (TAGLSVQQGI…TLRKERLAKL (380 aa)). The tract at residues 415–647 (PKTSGHYDDD…DSDNTQSEHS (233 aa)) is disordered. Low complexity-rich tracts occupy residues 449 to 458 (SQDTTIPDVV) and 504 to 514 (KGGQQKNSQKG). The Host PPP2R5C-binding motif motif lies at 562–567 (LTPINE). Positions 567-579 (EEADPLDDADDET) are enriched in acidic residues. The VP30-binding motif signature appears at 606–611 (PPAPVY). Residues 611–638 (YRDHSEKKELPQDEQQDQDHTQEARNQD) are compositionally biased toward basic and acidic residues.

The protein belongs to the filoviruses nucleoprotein family. As to quaternary structure, homooligomer. Homomultimerizes to form the nucleocapsid. Binds to viral genomic RNA. Interacts with VP35 and VP30 to form the nucleocapsid. Interacts with host PPP2R5C; this interaction leads to VP30 dephosphorylation and viral transcription. Interacts with VP24; this interaction facilitates nucleocapsid assembly and genome packaging. Interacts with matrix protein VP40; this interaction allows recruitment of the nucleocapsid into progeny virions. Interacts with host STAU1. Interacts with host NXF1 (via RNA-binding domain); this interaction recruits NXF1 to the inclusion bodies were viral replication takes place, probably to export viral mRNA-NXF1 complexes from these sites. Interacts with host CCDC92; this interaction sequesters NP in the host cytoplasm. Interacts with host TRIM14. Phosphorylated by host. In terms of processing, O-glycosylated by host. Post-translationally, acetylated by host EP300 in vitro.

The protein localises to the virion. It is found in the host cytoplasm. In terms of biological role, oligomerizes into helical capsid to encapsidate the viral genome, protecting it from nucleases and the cellular innate immune response. VP35 binds to and stabilizes monomeric NP, keeping it soluble. Upon virus replication, NP is recruited to bind cooperatively viral genomic RNA and VP35 is released. The encapsidated genomic RNA is termed the nucleocapsid and serves as template for transcription and replication. The nucleocapsid is helical with a pitch of 10.81 NP per turn and a diameter of about 22nm. Each NP binds to six nucleotides of viral genomic RNA, three being exposed to the solvant and three hidden into the nucleocapsid. Also recruits host PPP2R5C phosphatase to dephosphorylate VP30 and thereby promote viral transcription. Upon virion assembly and budding, NP binds to VP24 and possibly host STAU1. This chain is Nucleoprotein (NP), found in Epomops franqueti (Franquet's epauletted fruit bat).